The chain runs to 275 residues: Nitrogenase iron protein 3 (275 aa).

9–16 (GKGGIGKS) lines the ATP pocket. C97 provides a ligand contact to [4Fe-4S] cluster. An ADP-ribosylarginine; by dinitrogenase reductase ADP-ribosyltransferase modification is found at R100. C132 provides a ligand contact to [4Fe-4S] cluster.

Belongs to the NifH/BchL/ChlL family. Homodimer. Requires [4Fe-4S] cluster as cofactor. Post-translationally, the reversible ADP-ribosylation of Arg-100 inactivates the nitrogenase reductase and regulates nitrogenase activity.

The catalysed reaction is N2 + 8 reduced [2Fe-2S]-[ferredoxin] + 16 ATP + 16 H2O = H2 + 8 oxidized [2Fe-2S]-[ferredoxin] + 2 NH4(+) + 16 ADP + 16 phosphate + 6 H(+). Functionally, the key enzymatic reactions in nitrogen fixation are catalyzed by the nitrogenase complex, which has 2 components: the iron protein (component 2) and a component 1 which is either a molybdenum-iron protein, a vanadium-iron, or an iron-iron protein. This Azotobacter vinelandii protein is Nitrogenase iron protein 3 (anfH).